A 142-amino-acid polypeptide reads, in one-letter code: Large ribosomal subunit protein uL13 (142 aa).

This sequence belongs to the universal ribosomal protein uL13 family. As to quaternary structure, part of the 50S ribosomal subunit.

Functionally, this protein is one of the early assembly proteins of the 50S ribosomal subunit, although it is not seen to bind rRNA by itself. It is important during the early stages of 50S assembly. This chain is Large ribosomal subunit protein uL13, found in Ralstonia pickettii (strain 12J).